The primary structure comprises 120 residues: Small ribosomal subunit protein uS13 (120 aa).

The tract at residues 92–120 (RRGLPCRGQRTRTNARTRKGPRKPIAGKK) is disordered.

Belongs to the universal ribosomal protein uS13 family. As to quaternary structure, part of the 30S ribosomal subunit. Forms a loose heterodimer with protein S19. Forms two bridges to the 50S subunit in the 70S ribosome.

Functionally, located at the top of the head of the 30S subunit, it contacts several helices of the 16S rRNA. In the 70S ribosome it contacts the 23S rRNA (bridge B1a) and protein L5 of the 50S subunit (bridge B1b), connecting the 2 subunits; these bridges are implicated in subunit movement. Contacts the tRNAs in the A and P-sites. This is Small ribosomal subunit protein uS13 from Laribacter hongkongensis (strain HLHK9).